The chain runs to 435 residues: Prenyltransferase nanD (435 aa).

Position 101 (Glu-101) interacts with substrate. Arg-114, Lys-202, and Tyr-204 together coordinate dimethylallyl diphosphate. Tyr-206 serves as a coordination point for substrate. The dimethylallyl diphosphate site is built by Lys-280, Tyr-282, Tyr-364, Tyr-429, and Tyr-433.

It belongs to the tryptophan dimethylallyltransferase family.

Its pathway is secondary metabolite biosynthesis. Prenyltransferase; part of the gene cluster that mediates the biosynthesis of the benzazepine alkaloid nanangelenin A which contains an unprecedented 3,4-dihydro-1-benzazepine-2,5-dione-N-prenyl-N-acetoxy-anthranilamide scaffold. The first step of nanangelenin biosynthesis is catalyzed by the indoleamine 2,3-dioxygenase nanC which produces N-formyl-kynurenine through the catabolism of tryptophan. The two-module NRPS nanA then utilizes anthranilate (Ant) and L-kynurenine (L-Kyn) to assemble the dipeptide product nanangelenin B. The first adenylation domain of nanA (A1) loads anthranilate onto the T1 domain, while A2 loads kynurenine, generated through spontaneous nonenzymatic deformylation of the nanC-supplied N-formyl-kynurenine. The peptide bond formation between the tethered amino acids is catalyzed by the first condensation domain (C1) between anthranilate's carbonyl carbon and kynurenine's aliphatic primary amine. The second C domain (C2) catalyzes the final cyclization event between the aromatic amine of kynurenine and the tethered carbonyl carbon, yielding nanangelenin B. The terminal T3 domain enhances the catalytic efficiency of C2, suggesting the T2-tethered Ant-L-Kyn is transferred to T3 prior to cyclization by C2. Once released from nanA, nanangelenin B is then prenylated by the prenyltransferase nanD to form nanangelenin C. Nanangelenin C is then N-hydroxylated by the FAD-dependent monooxygenase nanF and further acetylated by the acetyltransferase nanB to yield nanangelenin F. Finally, the N-methyltransferase nanE methylates the amide nitrogen of 1-benzazepine to convert nanangelenin F into nanangelenin A. NanE is also able to methylate most of the intermediates of the pathway such as nanangelenin B and nanangelenin C to produce nanangelenin D and nanangelenin E, respectively. This Aspergillus nanangensis protein is Prenyltransferase nanD.